The following is a 461-amino-acid chain: V-type ATP synthase beta chain (461 aa).

This sequence belongs to the ATPase alpha/beta chains family.

In terms of biological role, produces ATP from ADP in the presence of a proton gradient across the membrane. The V-type beta chain is a regulatory subunit. The sequence is that of V-type ATP synthase beta chain from Clostridium botulinum (strain 657 / Type Ba4).